Here is a 310-residue protein sequence, read N- to C-terminus: HTH-type transcriptional activator TtdR (310 aa).

An HTH lysR-type domain is found at 6-63 (PLAKDLQVLVEIVHSGSFSAAAATLGQTPAFVTKRIQILENTLATTLLNRSARGVALT). The segment at residues 23 to 42 (FSAAAATLGQTPAFVTKRIQ) is a DNA-binding region (H-T-H motif).

This sequence belongs to the LysR transcriptional regulatory family.

Functionally, positive regulator required for L-tartrate-dependent anaerobic growth on glycerol. Induces expression of the ttdA-ttdB-ygjE operon. The protein is HTH-type transcriptional activator TtdR (ttdR) of Escherichia coli (strain K12).